The primary structure comprises 101 residues: Synaptobrevin-B (101 aa).

The Cytoplasmic segment spans residues 1 to 76 (MSNNPNNSGQ…RRQMWCRNMK (76 aa)). The region spanning 13–73 (KTQSILQEVD…VTIRRQMWCR (61 aa)) is the v-SNARE coiled-coil homology domain. Residues 77–97 (LQLIIIAVVILVLAVILIPII) form a helical; Anchor for type IV membrane protein membrane-spanning segment. The Vesicular segment spans residues 98 to 101 (MKFV).

Belongs to the synaptobrevin family.

The protein resides in the cytoplasmic vesicle. Its subcellular location is the secretory vesicle membrane. Its function is as follows. Involved in the targeting and/or fusion of transport vesicles to their target membrane. This chain is Synaptobrevin-B (sybB), found in Dictyostelium discoideum (Social amoeba).